The sequence spans 213 residues: Pyrrolidone-carboxylate peptidase (213 aa).

Active-site residues include Glu78, Cys141, and His165.

This sequence belongs to the peptidase C15 family. In terms of assembly, homotetramer.

It localises to the cytoplasm. The enzyme catalyses Release of an N-terminal pyroglutamyl group from a polypeptide, the second amino acid generally not being Pro.. Removes 5-oxoproline from various penultimate amino acid residues except L-proline. The chain is Pyrrolidone-carboxylate peptidase from Clostridium perfringens (strain 13 / Type A).